A 283-amino-acid polypeptide reads, in one-letter code: D-alanine aminotransferase (283 aa).

A substrate-binding site is contributed by Y32. Residue R51 coordinates pyridoxal 5'-phosphate. Residues R99 and H101 each contribute to the substrate site. K146 acts as the Proton acceptor in catalysis. The residue at position 146 (K146) is an N6-(pyridoxal phosphate)lysine. Pyridoxal 5'-phosphate is bound at residue E178.

Belongs to the class-IV pyridoxal-phosphate-dependent aminotransferase family. In terms of assembly, homodimer. The cofactor is pyridoxal 5'-phosphate.

The catalysed reaction is D-alanine + 2-oxoglutarate = D-glutamate + pyruvate. Its function is as follows. Acts on the D-isomers of alanine, leucine, aspartate, glutamate, aminobutyrate, norvaline and asparagine. The enzyme transfers an amino group from a substrate D-amino acid to the pyridoxal phosphate cofactor to form pyridoxamine and an alpha-keto acid in the first half-reaction. The second-half reaction is the reverse of the first, transferring the amino group from the pyridoxamine to a second alpha-keto acid to form the product D-amino acid via a ping-pong mechanism. This is an important process in the formation of D-alanine and D-glutamate, which are essential bacterial cell wall components. The protein is D-alanine aminotransferase (dat) of Bacillus sp. (strain YM-1).